A 541-amino-acid chain; its full sequence is CRISPR-associated exonuclease Cas4/endonuclease Cas1 fusion (541 aa).

Residues 1 to 179 form a CRISPR-associated exonuclease Cas4 region; the sequence is MGIHSLLYCE…NCSLAPVCLP (179 aa). C9 serves as a coordination point for [4Fe-4S] cluster. The Mn(2+) site is built by D65 and E78. The [4Fe-4S] cluster site is built by C168, C171, and C177. Residues 204–541 are CRISPR-associated endonuclease Cas1; the sequence is TLHVFGHDSR…ANIFAQARLR (338 aa). Mn(2+)-binding residues include E365, H433, and E448.

In the N-terminal section; belongs to the CRISPR-associated exonuclease Cas4 family. It in the C-terminal section; belongs to the CRISPR-associated endonuclease Cas1 family. Homodimer, forms a heterotetramer with a Cas2 homodimer. The cofactor is [4Fe-4S] cluster. Requires Mg(2+) as cofactor. It depends on Mn(2+) as a cofactor.

It catalyses the reaction exonucleolytic cleavage in the 5'- to 3'-direction to yield nucleoside 3'-phosphates.. Its function is as follows. CRISPR (clustered regularly interspaced short palindromic repeat), is an adaptive immune system that provides protection against mobile genetic elements (viruses, transposable elements and conjugative plasmids). CRISPR clusters contain spacers, sequences complementary to antecedent mobile elements, and target invading nucleic acids. CRISPR clusters are transcribed and processed into CRISPR RNA (crRNA). The Cas4 region acts as a ssDNA exonuclease, while the Cas1 region acts as a dsDNA endonuclease. Involved in the integration of spacer DNA into the CRISPR cassette. The sequence is that of CRISPR-associated exonuclease Cas4/endonuclease Cas1 fusion (cas4-cas1) from Leptospira interrogans serogroup Icterohaemorrhagiae serovar Lai (strain 56601).